Here is a 564-residue protein sequence, read N- to C-terminus: Dihydroxy-acid dehydratase (564 aa).

Cys53 is a binding site for [2Fe-2S] cluster. Mg(2+) is bound at residue Asp85. Cys126 contributes to the [2Fe-2S] cluster binding site. Residues Asp127 and Lys128 each contribute to the Mg(2+) site. At Lys128 the chain carries N6-carboxylysine. Position 203 (Cys203) interacts with [2Fe-2S] cluster. Residue Glu454 coordinates Mg(2+). Ser480 serves as the catalytic Proton acceptor.

This sequence belongs to the IlvD/Edd family. As to quaternary structure, homodimer. [2Fe-2S] cluster serves as cofactor. Mg(2+) is required as a cofactor.

The enzyme catalyses (2R)-2,3-dihydroxy-3-methylbutanoate = 3-methyl-2-oxobutanoate + H2O. It catalyses the reaction (2R,3R)-2,3-dihydroxy-3-methylpentanoate = (S)-3-methyl-2-oxopentanoate + H2O. Its pathway is amino-acid biosynthesis; L-isoleucine biosynthesis; L-isoleucine from 2-oxobutanoate: step 3/4. It functions in the pathway amino-acid biosynthesis; L-valine biosynthesis; L-valine from pyruvate: step 3/4. Its function is as follows. Functions in the biosynthesis of branched-chain amino acids. Catalyzes the dehydration of (2R,3R)-2,3-dihydroxy-3-methylpentanoate (2,3-dihydroxy-3-methylvalerate) into 2-oxo-3-methylpentanoate (2-oxo-3-methylvalerate) and of (2R)-2,3-dihydroxy-3-methylbutanoate (2,3-dihydroxyisovalerate) into 2-oxo-3-methylbutanoate (2-oxoisovalerate), the penultimate precursor to L-isoleucine and L-valine, respectively. The polypeptide is Dihydroxy-acid dehydratase (Mycobacterium leprae (strain TN)).